The chain runs to 145 residues: Large ribosomal subunit protein bL19 (145 aa).

The protein belongs to the bacterial ribosomal protein bL19 family.

Functionally, this protein is located at the 30S-50S ribosomal subunit interface and may play a role in the structure and function of the aminoacyl-tRNA binding site. The protein is Large ribosomal subunit protein bL19 of Brucella abortus (strain S19).